The following is a 92-amino-acid chain: Large ribosomal subunit protein eL43 (92 aa).

The segment at 39-60 (CEFCGKYAVKRKAVGIWGCKAC) adopts a C4-type zinc-finger fold.

Belongs to the eukaryotic ribosomal protein eL43 family.

In Gossypium hirsutum (Upland cotton), this protein is Large ribosomal subunit protein eL43 (RPL37A).